The primary structure comprises 287 residues: Inorganic pyrophosphatase (287 aa).

Position 79 (Arg-79) interacts with diphosphate. Mg(2+) contacts are provided by Asp-116, Asp-121, and Asp-153.

This sequence belongs to the PPase family. Mg(2+) is required as a cofactor.

The protein localises to the cytoplasm. It carries out the reaction diphosphate + H2O = 2 phosphate + H(+). The protein is Inorganic pyrophosphatase (IPP1) of Eremothecium gossypii (strain ATCC 10895 / CBS 109.51 / FGSC 9923 / NRRL Y-1056) (Yeast).